The primary structure comprises 252 residues: Isoprenyl transferase (252 aa).

The active site involves aspartate 32. Residue aspartate 32 participates in Mg(2+) binding. Substrate contacts are provided by residues 33–36, tryptophan 37, arginine 45, histidine 49, and 77–79; these read GNGR and STE. Residue asparagine 80 is the Proton acceptor of the active site. Residues tryptophan 81, arginine 83, arginine 200, and 206 to 208 contribute to the substrate site; that span reads RLS. Mg(2+) is bound at residue glutamate 219.

Belongs to the UPP synthase family. As to quaternary structure, homodimer. Mg(2+) is required as a cofactor.

Functionally, catalyzes the condensation of isopentenyl diphosphate (IPP) with allylic pyrophosphates generating different type of terpenoids. The polypeptide is Isoprenyl transferase (Listeria monocytogenes serovar 1/2a (strain ATCC BAA-679 / EGD-e)).